The sequence spans 312 residues: DNA-directed RNA polymerase subunit alpha (312 aa).

The alpha N-terminal domain (alpha-NTD) stretch occupies residues 1–226 (MIEFEKPTIT…EHLGLFTDLT (226 aa)). Positions 242–312 (SDDRMLDRTI…DLGLGLKKDK (71 aa)) are alpha C-terminal domain (alpha-CTD).

This sequence belongs to the RNA polymerase alpha chain family. Homodimer. The RNAP catalytic core consists of 2 alpha, 1 beta, 1 beta' and 1 omega subunit. When a sigma factor is associated with the core the holoenzyme is formed, which can initiate transcription.

The enzyme catalyses RNA(n) + a ribonucleoside 5'-triphosphate = RNA(n+1) + diphosphate. Its function is as follows. DNA-dependent RNA polymerase catalyzes the transcription of DNA into RNA using the four ribonucleoside triphosphates as substrates. The chain is DNA-directed RNA polymerase subunit alpha from Streptococcus suis (strain 98HAH33).